The following is a 297-amino-acid chain: Acetaldehyde dehydrogenase (297 aa).

15 to 18 contacts NAD(+); the sequence is SGSI. Residue Cys130 is the Acyl-thioester intermediate of the active site. NAD(+)-binding positions include 162 to 170 and Asn272; that span reads SAGIATREN.

This sequence belongs to the acetaldehyde dehydrogenase family.

It catalyses the reaction acetaldehyde + NAD(+) + CoA = acetyl-CoA + NADH + H(+). The sequence is that of Acetaldehyde dehydrogenase from Burkholderia pseudomallei (strain 1106a).